A 901-amino-acid chain; its full sequence is Clathrin coat assembly protein AP180 (901 aa).

Positions glutamine 14–phenylalanine 145 constitute an ENTH domain. Disordered stretches follow at residues leucine 285–proline 326, proline 397–threonine 424, proline 497–alanine 522, and alanine 573–serine 606. Phosphoserine occurs at positions 296, 300, and 306. The segment covering leucine 302 to threonine 324 has biased composition (polar residues). Threonine 310 carries an O-linked (GlcNAc) threonine glycan. Phosphoserine is present on serine 313. Threonine 317 carries the phosphothreonine modification. 2 stretches are compositionally biased toward low complexity: residues threonine 410–threonine 424 and serine 500–alanine 511. Pro residues predominate over residues proline 512–alanine 522. Residues serine 594, serine 600, serine 621, serine 627, and serine 761 each carry the phosphoserine modification. Disordered regions lie at residues serine 803–methionine 845 and methionine 857–leucine 901. Residues glycine 835–methionine 845 are compositionally biased toward low complexity. At arginine 859 the chain carries Asymmetric dimethylarginine; alternate. An Omega-N-methylarginine; alternate modification is found at arginine 859. Polar residues predominate over residues threonine 870–serine 882. A compositionally biased stretch (basic and acidic residues) spans proline 887 to leucine 901.

Belongs to the PICALM/SNAP91 family. In terms of assembly, binds AP2A2. Interacts with AP2B1; clathrin competes with SNAP91. Post-translationally, thr-310 can be modified by the addition of N-acetylglucosamine which can be further phosphorylated. There is no evidence for direct Thr-310 phosphorylation. In terms of tissue distribution, brain. Associated with the synapses.

The protein resides in the cell membrane. The protein localises to the membrane. It is found in the coated pit. Adaptins are components of the adaptor complexes which link clathrin to receptors in coated vesicles. Clathrin-associated protein complexes are believed to interact with the cytoplasmic tails of membrane proteins, leading to their selection and concentration. Binding of AP180 to clathrin triskelia induces their assembly into 60-70 nm coats. This chain is Clathrin coat assembly protein AP180 (Snap91), found in Mus musculus (Mouse).